A 224-amino-acid polypeptide reads, in one-letter code: 2-C-methyl-D-erythritol 4-phosphate cytidylyltransferase (224 aa).

It belongs to the IspD/TarI cytidylyltransferase family. IspD subfamily.

The enzyme catalyses 2-C-methyl-D-erythritol 4-phosphate + CTP + H(+) = 4-CDP-2-C-methyl-D-erythritol + diphosphate. The protein operates within isoprenoid biosynthesis; isopentenyl diphosphate biosynthesis via DXP pathway; isopentenyl diphosphate from 1-deoxy-D-xylulose 5-phosphate: step 2/6. In terms of biological role, catalyzes the formation of 4-diphosphocytidyl-2-C-methyl-D-erythritol from CTP and 2-C-methyl-D-erythritol 4-phosphate (MEP). This is 2-C-methyl-D-erythritol 4-phosphate cytidylyltransferase from Caldicellulosiruptor saccharolyticus (strain ATCC 43494 / DSM 8903 / Tp8T 6331).